The sequence spans 165 residues: Small ribosomal subunit protein bS16 (165 aa).

The interval 110 to 165 (LSEANNGPTAEAITEKKKKAREDKEAKEAAEKAAAEKAAAAESEEAPAEEAAAEEA) is disordered. A compositionally biased stretch (basic and acidic residues) spans 129 to 144 (AREDKEAKEAAEKAAA). A compositionally biased stretch (acidic residues) spans 151–165 (ESEEAPAEEAAAEEA).

This sequence belongs to the bacterial ribosomal protein bS16 family.

This chain is Small ribosomal subunit protein bS16, found in Corynebacterium glutamicum (strain R).